A 285-amino-acid chain; its full sequence is MDRSVVPISLAPFQFLLVFWIFLTSVHTNPNKQQKTVVSLSLWWNSKNRIRGCVWFFFLLRVTRTMGQQNLIYSFVARGTVILVEYTEFKGNFTAVAAQCLQKLPSSNNKFTYNCDGHTFNYLVENGFTYCVVAVESVGRQIPMAFLERVKEDFNKRYGGGKATTAQANSLNREFGSKLKEHMQYCVDHPDEISKLAKVKAQVTEVKGVMMENIEKVLDRGEKIELLVDKTENLRSQAQDFRTQGTKIRRKMWFENMKIKLIVLGIIITLILIIILSVCGGFKCT.

At 1–261 (MDRSVVPISL…MWFENMKIKL (261 aa)) the chain is on the cytoplasmic side. Positions 75 to 179 (FVARGTVILV…SLNREFGSKL (105 aa)) constitute a Longin domain. Residues 195 to 255 (KLAKVKAQVT…TKIRRKMWFE (61 aa)) enclose the v-SNARE coiled-coil homology domain. A helical; Anchor for type IV membrane protein transmembrane segment spans residues 262–282 (IVLGIIITLILIIILSVCGGF). Over 283–285 (KCT) the chain is Vesicular.

Belongs to the synaptobrevin family. As to expression, expressed in flowers, leaves, stems and roots.

It is found in the cell membrane. The protein localises to the early endosome membrane. In terms of biological role, involved in the targeting and/or fusion of transport vesicles to their target membrane. This chain is Vesicle-associated membrane protein 725, found in Arabidopsis thaliana (Mouse-ear cress).